The sequence spans 173 residues: MPRSQKNDNFIDKTFSIIADLIVKILPTNKESKEAFYYYKDGMAAQSEGEYAEALACYYQALKIEKDPMDKSFILYNIGLIQASNGQHARALEYYHESLKFNPNLVQALNNIAVIYHYYGNKLFEQSKLQEAKLMFDKASNYWRKAIKLAPYNYIEAQNWLKITGRITEDIML.

TPR repeat units lie at residues 35–68, 72–105, and 120–153; these read AFYY…EKDP, SFIL…NPNL, and GNKL…APYN.

Belongs to the Ycf3 family.

The protein resides in the plastid. Its subcellular location is the chloroplast thylakoid membrane. Functionally, essential for the assembly of the photosystem I (PSI) complex. May act as a chaperone-like factor to guide the assembly of the PSI subunits. This chain is Photosystem I assembly protein Ycf3, found in Cyanidium caldarium (Red alga).